A 237-amino-acid chain; its full sequence is Lectin alpha chain (237 aa).

Mn(2+) is bound by residues Glu8 and Asp10. Ca(2+)-binding residues include Asp10, Tyr12, Asn14, and Asp19. Residue Tyr12 participates in a carbohydrate binding. Mn(2+)-binding residues include Asp19, His24, and Ser34. 99 to 100 (LY) is an a carbohydrate binding site. Asp208 provides a ligand contact to Ca(2+). Arg228 serves as a coordination point for a carbohydrate.

It belongs to the leguminous lectin family. As to quaternary structure, homotetramer. Post-translationally, the beta and gamma chains are produced by partial proteolytic processing of the lectin alpha chain by an asparaginyl endopeptidase. Mixture of 60% alpha lectin and 40% of its beta and gamma proteolytic fragments.

Its function is as follows. D-mannose/D-glucose-binding lectin. Has anti-inflammatory activity in rats. Induces histamine release in mast cells from rat. Induces lymphocyte proliferation and IFNG production. Shows toxicity against the aquatic snail B.glabrata at concentrations higher than 50 ug/ml. The sequence is that of Lectin alpha chain from Dioclea grandiflora (Mucana).